A 223-amino-acid chain; its full sequence is uncharacterized protein (223 aa).

The disordered stretch occupies residues 117 to 148; the sequence is THAHTHAHTHGHTHTRAHSTHAHTHAHSHYHT.

This is an uncharacterized protein from Homo sapiens (Human).